Here is a 638-residue protein sequence, read N- to C-terminus: Chaperone protein HtpG (638 aa).

Positions 1–346 (MSQQETHGFQ…SNDLPLNVSR (346 aa)) are a; substrate-binding. The interval 347–563 (EILQDNKVTT…EGEMSTQMIK (217 aa)) is b. The c stretch occupies residues 564–638 (LMEAAGQAVP…MNEMLLAKLK (75 aa)).

It belongs to the heat shock protein 90 family. As to quaternary structure, homodimer.

The protein resides in the cytoplasm. Functionally, molecular chaperone. Has ATPase activity. The polypeptide is Chaperone protein HtpG (Shewanella sediminis (strain HAW-EB3)).